The primary structure comprises 377 residues: L-arabinitol 4-dehydrogenase (377 aa).

C66, H91, E92, C121, C124, C127, C135, and E176 together coordinate Zn(2+). NAD(+)-binding positions include 203–204 (PI), D224, R229, I296, and 320–322 (QYR).

This sequence belongs to the zinc-containing alcohol dehydrogenase family. Homotetramer. Zn(2+) serves as cofactor. The N-terminus is blocked.

It carries out the reaction L-arabinitol + NAD(+) = L-xylulose + NADH + H(+). It functions in the pathway carbohydrate degradation; L-arabinose degradation via L-arabinitol; D-xylulose 5-phosphate from L-arabinose (fungal route): step 2/5. In terms of biological role, catalyzes the NAD-dependent oxidation of L-arabinitol to L-xylulose in the fungal L-arabinose catabolic pathway. L-arabinose catabolism is important for using plant material as a carbon source. Can partially compensate for xylitol dehydrogenase in xdh1 mutants. Also oxidizes galactitol to L-xylo-3-hexulose as an alternative to the standard Leloir pathway for D-galactose metabolism. NADP cannot act as a cosubstrate. This is L-arabinitol 4-dehydrogenase (lad1) from Hypocrea jecorina (Trichoderma reesei).